The primary structure comprises 516 residues: Importin subunit alpha-B (516 aa).

Residues 1-29 (MQRSKQETRKSQYKKSIDSDESRRKREEA) are compositionally biased toward basic and acidic residues. The interval 1-54 (MQRSKQETRKSQYKKSIDSDESRRKREEASLSIRKNKREESLLKKRTQAVPGST) is disordered. Positions 1–55 (MQRSKQETRKSQYKKSIDSDESRRKREEASLSIRKNKREESLLKKRTQAVPGSTP) constitute an IBB domain. ARM repeat units follow at residues 55–96 (PVKV…KLLS), 100–140 (SPPI…NIAS), 143–182 (PEQT…NIAG), 185–227 (HYCR…NFCR), 229–268 (KPQP…YLSD), 271–310 (NERI…NIVT), 313–352 (DNQT…NITA), 355–394 (KNQI…NATS), and 398–437 (PQQI…NILV). Residues 490 to 516 (EQEDEGDLMPEGSSFSFSNQTNSNFNL) are disordered. Residues 502 to 516 (SSFSFSNQTNSNFNL) show a composition bias toward low complexity.

The protein belongs to the importin alpha family. Forms a complex with tnpo/importin subunit beta.

It localises to the cytoplasm. It is found in the nucleus envelope. Functions in nuclear protein import via a substrate-importin alpha-beta transport complex that passes though the nuclear pore complexes (NPC). Binds specifically and directly to substrates containing either a simple or bipartite NLS motif. In Dictyostelium discoideum (Social amoeba), this protein is Importin subunit alpha-B.